The sequence spans 324 residues: Sperm acrosome membrane-associated protein 6 (324 aa).

Positions 1 to 26 are cleaved as a signal peptide; sequence MALLALASAVPSALLALAVFRVPAWA. The CXXC motif signature appears at 27-30; it reads CLLC. 6 disulfides stabilise this stretch: cysteine 27–cysteine 139, cysteine 30–cysteine 142, cysteine 41–cysteine 55, cysteine 124–cysteine 147, cysteine 128–cysteine 153, and cysteine 170–cysteine 226. At 27 to 295 the chain is on the extracellular side; the sequence is CLLCFTTYSE…RPEALTPSNL (269 aa). The CXXC motif motif lies at 139 to 142; that stretch reads CSGC. The Ig-like domain occupies 150-236; it reads PLDCPVQDVT…VIKQDQRPLA (87 aa). N-linked (GlcNAc...) asparagine glycosylation occurs at asparagine 243. The helical transmembrane segment at 296-316 threads the bilayer; that stretch reads FLLAVLGALASASATVLAWMF. Residues 317-324 are Cytoplasmic-facing; it reads FRWYCSGN.

The protein belongs to the SPACA6 family. As to quaternary structure, forms a complex with IZUMO1 and TMEM81 on spermatocyte cell membrane required for fertilization. As to expression, detected at the sperm head, equatorial region, neck and midpiece (at protein level). Expressed in testis.

Its subcellular location is the cytoplasmic vesicle. The protein resides in the secretory vesicle. It localises to the acrosome membrane. Functionally, sperm protein required for fusion of sperm with the egg membrane during fertilization. May regulate the expression of sperm surface protein DCST2. This chain is Sperm acrosome membrane-associated protein 6, found in Homo sapiens (Human).